The chain runs to 316 residues: Malate dehydrogenase (316 aa).

NAD(+) is bound by residues glycine 12–glycine 17 and aspartate 36. Positions 85 and 91 each coordinate substrate. NAD(+)-binding positions include asparagine 98 and valine 121–asparagine 123. Residues asparagine 123 and arginine 154 each coordinate substrate. The Proton acceptor role is filled by histidine 178.

The protein belongs to the LDH/MDH superfamily. MDH type 3 family.

It catalyses the reaction (S)-malate + NAD(+) = oxaloacetate + NADH + H(+). In terms of biological role, catalyzes the reversible oxidation of malate to oxaloacetate. The protein is Malate dehydrogenase of Wolbachia sp. subsp. Brugia malayi (strain TRS).